Here is a 219-residue protein sequence, read N- to C-terminus: Probable GTP-binding protein EngB (219 aa).

Residues 42-219 (SVPEIAFAGR…RTAVLEAVEL (178 aa)) enclose the EngB-type G domain. GTP-binding positions include 50-57 (GRSNVGKS), 77-81 (GRTQE), 97-100 (DMPG), 164-167 (TKAD), and 198-200 (TSS). Residues serine 57 and threonine 79 each contribute to the Mg(2+) site.

The protein belongs to the TRAFAC class TrmE-Era-EngA-EngB-Septin-like GTPase superfamily. EngB GTPase family. It depends on Mg(2+) as a cofactor.

In terms of biological role, necessary for normal cell division and for the maintenance of normal septation. This Sphingopyxis alaskensis (strain DSM 13593 / LMG 18877 / RB2256) (Sphingomonas alaskensis) protein is Probable GTP-binding protein EngB.